The primary structure comprises 60 residues: Large ribosomal subunit protein uL30 (60 aa).

Belongs to the universal ribosomal protein uL30 family. Part of the 50S ribosomal subunit.

The protein is Large ribosomal subunit protein uL30 of Pseudoalteromonas translucida (strain TAC 125).